We begin with the raw amino-acid sequence, 179 residues long: MNRLQERYEKEVVPAMMEKFGYKNIMQVPKIEKVVINMGVGEAKDNPKVLESAVSDLQIIAGQKPVLTRAKKSVANFKIRENMALGCKVTLRKTNMYEFVDKLVSIALPRVRDFRGVSAKAFDGRGNYSLGIKEQLIFPEIEYDKVDKVRGMDIIFVTSANTDEEARELLRFLGMPFAQ.

Belongs to the universal ribosomal protein uL5 family. Part of the 50S ribosomal subunit; part of the 5S rRNA/L5/L18/L25 subcomplex. Contacts the 5S rRNA and the P site tRNA. Forms a bridge to the 30S subunit in the 70S ribosome.

In terms of biological role, this is one of the proteins that bind and probably mediate the attachment of the 5S RNA into the large ribosomal subunit, where it forms part of the central protuberance. In the 70S ribosome it contacts protein S13 of the 30S subunit (bridge B1b), connecting the 2 subunits; this bridge is implicated in subunit movement. Contacts the P site tRNA; the 5S rRNA and some of its associated proteins might help stabilize positioning of ribosome-bound tRNAs. In Clostridium perfringens (strain ATCC 13124 / DSM 756 / JCM 1290 / NCIMB 6125 / NCTC 8237 / Type A), this protein is Large ribosomal subunit protein uL5.